The primary structure comprises 681 residues: Methionine--tRNA ligase (681 aa).

The 'HIGH' region signature appears at 14-24 (PYANGSIHLGH). Zn(2+) contacts are provided by Cys-145, Cys-148, Cys-158, and Cys-161. The 'KMSKS' region signature appears at 331–335 (KMSKS). Position 334 (Lys-334) interacts with ATP. Residues 579-681 (AFAAVDLRIA…AGAKPGQRVH (103 aa)) form the tRNA-binding domain.

The protein belongs to the class-I aminoacyl-tRNA synthetase family. MetG type 1 subfamily. In terms of assembly, homodimer. Requires Zn(2+) as cofactor.

It is found in the cytoplasm. The catalysed reaction is tRNA(Met) + L-methionine + ATP = L-methionyl-tRNA(Met) + AMP + diphosphate. Is required not only for elongation of protein synthesis but also for the initiation of all mRNA translation through initiator tRNA(fMet) aminoacylation. The protein is Methionine--tRNA ligase of Azotobacter vinelandii (strain DJ / ATCC BAA-1303).